The following is a 175-amino-acid chain: Cytochrome c-type biogenesis protein CcmE (175 aa).

Over 1-8 the chain is Cytoplasmic; it reads MNAVRRKK. A helical; Signal-anchor for type II membrane protein membrane pass occupies residues 9-29; it reads LIWVAATLAGAIIAVLLVIYA. Residues 30 to 175 lie on the Periplasmic side of the membrane; it reads IGQQTDYYFD…GNHTTSTLQE (146 aa). Heme contacts are provided by His-124 and Tyr-128. Positions 142–175 are disordered; it reads AAKGVTPTSEQFSPAIPVKQTAGEGNHTTSTLQE.

Belongs to the CcmE/CycJ family.

It localises to the cell inner membrane. In terms of biological role, heme chaperone required for the biogenesis of c-type cytochromes. Transiently binds heme delivered by CcmC and transfers the heme to apo-cytochromes in a process facilitated by CcmF and CcmH. The polypeptide is Cytochrome c-type biogenesis protein CcmE (Psychrobacter sp. (strain PRwf-1)).